The primary structure comprises 368 residues: MSAQSVEEDSILIIPTPDEEEKILRVKLEEDPDGEEGSSIPWNHLPDPEIFRQRFRQFGYQDSPGPREAVSQLRELCRLWLRPETHTKEQILELVVLEQFVAILPKELQTWVRDHHPENGEEAVTVLEDLESELDDPGQPVSLRRRKREVLVEDMVSQEEAQGLPSSELDAVENQLKWASWELHSLRHCDDDGRTENGALAPKQELPSALESHEVPGTLNMGVPQIFKYGETCFPKGRFERKRNPSRKKQHICDECGKHFSQGSALILHQRIHSGEKPYGCVECGKAFSRSSILVQHQRVHTGEKPYKCLECGKAFSQNSGLINHQRIHTGEKPYECVQCGKSYSQSSNLFRHQRRHNAEKLLNVVKV.

Lysine 22 is covalently cross-linked (Glycyl lysine isopeptide (Lys-Gly) (interchain with G-Cter in SUMO2)). Lysine 27 participates in a covalent cross-link: Glycyl lysine isopeptide (Lys-Gly) (interchain with G-Cter in SUMO1); alternate. Lysine 27 is covalently cross-linked (Glycyl lysine isopeptide (Lys-Gly) (interchain with G-Cter in SUMO2); alternate). In terms of domain architecture, SCAN box spans 52-134 (RQRFRQFGYQ…TVLEDLESEL (83 aa)). Phosphoserine occurs at positions 132 and 142. Glycyl lysine isopeptide (Lys-Gly) (interchain with G-Cter in SUMO2) cross-links involve residues lysine 147, lysine 177, and lysine 236. Residues 251–273 (HICDECGKHFSQGSALILHQRIH) form a C2H2-type 1 zinc finger. Residues 251-301 (HICDECGKHFSQGSALILHQRIHSGEKPYGCVECGKAFSRSSILVQHQRVH) are necessary and sufficient for nuclear localization. Serine 274 is subject to Phosphoserine. Glycyl lysine isopeptide (Lys-Gly) (interchain with G-Cter in SUMO2) cross-links involve residues lysine 277 and lysine 286. 3 C2H2-type zinc fingers span residues 279–301 (YGCV…QRVH), 307–329 (YKCL…QRIH), and 335–357 (YECV…QRRH). Serine 292 bears the Phosphoserine mark. Tyrosine 335 carries the phosphotyrosine modification. Glycyl lysine isopeptide (Lys-Gly) (interchain with G-Cter in SUMO2) cross-links involve residues lysine 361 and lysine 367.

This sequence belongs to the krueppel C2H2-type zinc-finger protein family. Post-translationally, sumoylated. As to expression, expressed in many tissues except in heart.

It is found in the nucleus. Transcription factor required for myelination of differentiated oligodendrocytes. Required for the conversion of oligodendrocytes from the premyelinating to the myelinating state. In the developing central nervous system (CNS), involved in the maintenance in the progenitor stage by promoting the cell cycle. Specifically binds to the 5'-TCAT-3' DNA sequence. Has transcription repressor activity in vitro. This chain is Zinc finger protein 24 (ZNF24), found in Homo sapiens (Human).